We begin with the raw amino-acid sequence, 308 residues long: Microtubule integrity protein mal3 (308 aa).

Residues 2-103 (SESRQELLAW…FVQWAKRFWD (102 aa)) enclose the Calponin-homology (CH) domain. The disordered stretch occupies residues 117–162 (RGNRGPANTRVMNSSAGATGPSRRRQVSSGSSTPSMTKSSANNNNV). Over residues 144-162 (SSGSSTPSMTKSSANNNNV) the composition is skewed to low complexity. An EB1 C-terminal domain is found at 173 to 247 (RAKQAQQQIT…LYSTEDGFEL (75 aa)).

Belongs to the MAPRE family. In terms of assembly, interacts with tea2.

Its subcellular location is the cytoplasm. The protein localises to the cytoskeleton. Functionally, may play a role in regulating the integrity of microtubules possibly by influencing their stability. Involved in an anchoring mechanism to maintain tea2 and tip1 at growing microtubule ends. Strongly stimulates the ATPase activity of tea2. The polypeptide is Microtubule integrity protein mal3 (mal3) (Schizosaccharomyces pombe (strain 972 / ATCC 24843) (Fission yeast)).